The following is a 120-amino-acid chain: Ribonuclease P protein component (120 aa).

This sequence belongs to the RnpA family. As to quaternary structure, consists of a catalytic RNA component (M1 or rnpB) and a protein subunit.

The enzyme catalyses Endonucleolytic cleavage of RNA, removing 5'-extranucleotides from tRNA precursor.. Functionally, RNaseP catalyzes the removal of the 5'-leader sequence from pre-tRNA to produce the mature 5'-terminus. It can also cleave other RNA substrates such as 4.5S RNA. The protein component plays an auxiliary but essential role in vivo by binding to the 5'-leader sequence and broadening the substrate specificity of the ribozyme. The chain is Ribonuclease P protein component from Dictyoglomus thermophilum (strain ATCC 35947 / DSM 3960 / H-6-12).